A 112-amino-acid polypeptide reads, in one-letter code: Ig kappa chain V-III region TEPC 124 (112 aa).

The tract at residues 1 to 23 (DIVLTQSPASLAVSLGQRATISC) is framework-1. The cysteines at positions 23 and 92 are disulfide-linked. A complementarity-determining-1 region spans residues 24 to 38 (RASZSVNWYGNSFMZ). Residues 39–53 (WYZZKPGZPPKLLIY) are framework-2. Residues 54-60 (RASNLZS) are complementarity-determining-2. The framework-3 stretch occupies residues 61–92 (GIPARFSGSGSRTBFTLTIBPVZABDVATYFC). The tract at residues 93–101 (ZZSBZAPWT) is complementarity-determining-3. Positions 102–111 (FGSGTKLEIK) are framework-4.

This chain is Ig kappa chain V-III region TEPC 124, found in Mus musculus (Mouse).